Consider the following 302-residue polypeptide: 4-hydroxy-tetrahydrodipicolinate synthase (302 aa).

Thr-55 is a binding site for pyruvate. The active-site Proton donor/acceptor is the Tyr-144. Lys-172 acts as the Schiff-base intermediate with substrate in catalysis. Val-214 provides a ligand contact to pyruvate.

This sequence belongs to the DapA family. In terms of assembly, homotetramer; dimer of dimers.

It is found in the cytoplasm. The catalysed reaction is L-aspartate 4-semialdehyde + pyruvate = (2S,4S)-4-hydroxy-2,3,4,5-tetrahydrodipicolinate + H2O + H(+). Its pathway is amino-acid biosynthesis; L-lysine biosynthesis via DAP pathway; (S)-tetrahydrodipicolinate from L-aspartate: step 3/4. Its function is as follows. Catalyzes the condensation of (S)-aspartate-beta-semialdehyde [(S)-ASA] and pyruvate to 4-hydroxy-tetrahydrodipicolinate (HTPA). This is 4-hydroxy-tetrahydrodipicolinate synthase from Prochlorococcus marinus (strain MIT 9303).